A 338-amino-acid polypeptide reads, in one-letter code: Glyceraldehyde-3-phosphate dehydrogenase (338 aa).

NAD(+)-binding residues include Arg-13, Ile-14, Asp-35, Arg-80, and Ser-123. Residues Ser-152, Cys-153, Thr-154, Thr-183, Arg-198, Thr-212, Gly-213, and Arg-235 each coordinate D-glyceraldehyde 3-phosphate. The active-site Nucleophile is Cys-153. Asn-317 serves as a coordination point for NAD(+).

This sequence belongs to the glyceraldehyde-3-phosphate dehydrogenase family. As to quaternary structure, homotetramer.

It is found in the tegument membrane. The enzyme catalyses D-glyceraldehyde 3-phosphate + phosphate + NAD(+) = (2R)-3-phospho-glyceroyl phosphate + NADH + H(+). It participates in carbohydrate degradation; glycolysis; pyruvate from D-glyceraldehyde 3-phosphate: step 1/5. This antigen is associated with human resistance to schistosomiasis. This is Glyceraldehyde-3-phosphate dehydrogenase from Schistosoma mansoni (Blood fluke).